Here is an 86-residue protein sequence, read N- to C-terminus: RNA-binding protein Hfq (86 aa).

The region spanning 12-73 is the Sm domain; sequence DIFLNQVRKE…ISTISPQKPV (62 aa).

Belongs to the Hfq family. In terms of assembly, homohexamer.

Functionally, RNA chaperone that binds small regulatory RNA (sRNAs) and mRNAs to facilitate mRNA translational regulation in response to envelope stress, environmental stress and changes in metabolite concentrations. Also binds with high specificity to tRNAs. This Caldanaerobacter subterraneus subsp. tengcongensis (strain DSM 15242 / JCM 11007 / NBRC 100824 / MB4) (Thermoanaerobacter tengcongensis) protein is RNA-binding protein Hfq.